Here is a 143-residue protein sequence, read N- to C-terminus: Cofilin (143 aa).

Residues 5-137 enclose the ADF-H domain; that stretch reads GVAVADESLN…AYESVLEKVS (133 aa).

Belongs to the actin-binding proteins ADF family.

Its subcellular location is the cytoplasm. It localises to the cytoskeleton. The protein localises to the nucleus matrix. Its function is as follows. Controls reversibly actin polymerization and depolymerization in a pH-sensitive manner. It has the ability to bind G- and F-actin in a 1:1 ratio of cofilin to actin. Binding to F-actin is regulated by tropomyosin. It is the major component of intranuclear and cytoplasmic actin rods. Required for accumulation of actin at the cell division site via depolymerizing actin at the cell ends. In association with myosin II has a role in the assembly of the contractile ring via severing actin filaments. Involved in the maintenance of the contractile ring once formed. In association with profilin and capping protein, has a role in the mitotic reorganization of the actin cytoskeleton. The polypeptide is Cofilin (COF1) (Kluyveromyces lactis (strain ATCC 8585 / CBS 2359 / DSM 70799 / NBRC 1267 / NRRL Y-1140 / WM37) (Yeast)).